Consider the following 364-residue polypeptide: tRNA 2-selenouridine synthase (364 aa).

The 124-residue stretch at 14 to 137 (LIADTPIIDV…LRQTAIQATI (124 aa)) folds into the Rhodanese domain. Residue Cys-97 is the S-selanylcysteine intermediate of the active site.

This sequence belongs to the SelU family. Monomer.

The catalysed reaction is 5-methylaminomethyl-2-thiouridine(34) in tRNA + selenophosphate + (2E)-geranyl diphosphate + H2O + H(+) = 5-methylaminomethyl-2-selenouridine(34) in tRNA + (2E)-thiogeraniol + phosphate + diphosphate. It carries out the reaction 5-methylaminomethyl-2-thiouridine(34) in tRNA + (2E)-geranyl diphosphate = 5-methylaminomethyl-S-(2E)-geranyl-thiouridine(34) in tRNA + diphosphate. It catalyses the reaction 5-methylaminomethyl-S-(2E)-geranyl-thiouridine(34) in tRNA + selenophosphate + H(+) = 5-methylaminomethyl-2-(Se-phospho)selenouridine(34) in tRNA + (2E)-thiogeraniol. The enzyme catalyses 5-methylaminomethyl-2-(Se-phospho)selenouridine(34) in tRNA + H2O = 5-methylaminomethyl-2-selenouridine(34) in tRNA + phosphate. Functionally, involved in the post-transcriptional modification of the uridine at the wobble position (U34) of tRNA(Lys), tRNA(Glu) and tRNA(Gln). Catalyzes the conversion of 2-thiouridine (S2U-RNA) to 2-selenouridine (Se2U-RNA). Acts in a two-step process involving geranylation of 2-thiouridine (S2U) to S-geranyl-2-thiouridine (geS2U) and subsequent selenation of the latter derivative to 2-selenouridine (Se2U) in the tRNA chain. This is tRNA 2-selenouridine synthase from Escherichia coli O157:H7.